We begin with the raw amino-acid sequence, 162 residues long: Phosphopantetheine adenylyltransferase (162 aa).

Thr-10 lines the substrate pocket. Residues 10-11 and His-18 each bind ATP; that span reads TF. Residues Lys-42, Met-74, and Arg-88 each coordinate substrate. ATP is bound by residues 89 to 91, Glu-99, and 124 to 130; these read GLR and YAFLSST.

It belongs to the bacterial CoaD family. As to quaternary structure, homohexamer. It depends on Mg(2+) as a cofactor.

The protein resides in the cytoplasm. The enzyme catalyses (R)-4'-phosphopantetheine + ATP + H(+) = 3'-dephospho-CoA + diphosphate. It participates in cofactor biosynthesis; coenzyme A biosynthesis; CoA from (R)-pantothenate: step 4/5. Reversibly transfers an adenylyl group from ATP to 4'-phosphopantetheine, yielding dephospho-CoA (dPCoA) and pyrophosphate. This Aliivibrio salmonicida (strain LFI1238) (Vibrio salmonicida (strain LFI1238)) protein is Phosphopantetheine adenylyltransferase.